The sequence spans 899 residues: Bifunctional uridylyltransferase/uridylyl-removing enzyme (899 aa).

Residues 1–347 (MFISDPTDSL…PESERPEKSV (347 aa)) form a uridylyltransferase region. The uridylyl-removing stretch occupies residues 348–718 (LNARFNRVGD…EHRELALDAV (371 aa)). An HD domain is found at 465 to 581 (VDAHILLLIR…TKFANLVGNV (117 aa)). ACT domains follow at residues 719–804 (QIFI…RLPR) and 827–899 (VMSL…TPSC).

This sequence belongs to the GlnD family. Mg(2+) serves as cofactor.

It carries out the reaction [protein-PII]-L-tyrosine + UTP = [protein-PII]-uridylyl-L-tyrosine + diphosphate. The catalysed reaction is [protein-PII]-uridylyl-L-tyrosine + H2O = [protein-PII]-L-tyrosine + UMP + H(+). Its activity is regulated as follows. Uridylyltransferase (UTase) activity is inhibited by glutamine, while glutamine activates uridylyl-removing (UR) activity. In terms of biological role, modifies, by uridylylation and deuridylylation, the PII regulatory proteins (GlnB and homologs), in response to the nitrogen status of the cell that GlnD senses through the glutamine level. Under low glutamine levels, catalyzes the conversion of the PII proteins and UTP to PII-UMP and PPi, while under higher glutamine levels, GlnD hydrolyzes PII-UMP to PII and UMP (deuridylylation). Thus, controls uridylylation state and activity of the PII proteins, and plays an important role in the regulation of nitrogen assimilation and metabolism. This Psychrobacter sp. (strain PRwf-1) protein is Bifunctional uridylyltransferase/uridylyl-removing enzyme.